The following is a 210-amino-acid chain: Histidine biosynthesis bifunctional protein HisIE (210 aa).

Positions 1-106 are phosphoribosyl-AMP cyclohydrolase; sequence MTKYKIDFSK…SCFNTEVPFS (106 aa). Positions 107–210 are phosphoribosyl-ATP pyrophosphohydrolase; the sequence is VQTLAQTVQD…KGERQNIEQW (104 aa).

It in the N-terminal section; belongs to the PRA-CH family. This sequence in the C-terminal section; belongs to the PRA-PH family.

It localises to the cytoplasm. It carries out the reaction 1-(5-phospho-beta-D-ribosyl)-ATP + H2O = 1-(5-phospho-beta-D-ribosyl)-5'-AMP + diphosphate + H(+). It catalyses the reaction 1-(5-phospho-beta-D-ribosyl)-5'-AMP + H2O = 1-(5-phospho-beta-D-ribosyl)-5-[(5-phospho-beta-D-ribosylamino)methylideneamino]imidazole-4-carboxamide. It functions in the pathway amino-acid biosynthesis; L-histidine biosynthesis; L-histidine from 5-phospho-alpha-D-ribose 1-diphosphate: step 2/9. It participates in amino-acid biosynthesis; L-histidine biosynthesis; L-histidine from 5-phospho-alpha-D-ribose 1-diphosphate: step 3/9. In Staphylococcus aureus (strain Mu50 / ATCC 700699), this protein is Histidine biosynthesis bifunctional protein HisIE (hisI).